A 480-amino-acid polypeptide reads, in one-letter code: Pre-glycoprotein polyprotein GP complex (480 aa).

Gly-2 is lipidated: N-myristoyl glycine; by host. Over 2-17 (GQLVSFFQEIPVFFQE) the chain is Extracellular. The helical transmembrane segment at 18 to 33 (ALNIALAVVTLLAIVK) threads the bilayer. Residues 34–58 (GVLNLWKSGLFQLLMFLILAGRSCS) are Cytoplasmic-facing. Cys-57 is a binding site for Zn(2+). Residues 59-419 (FRIGYHTSFE…QGRTPLTLVD (361 aa)) lie on the Extracellular side of the membrane. Disulfide bonds link Cys-85/Cys-221, Cys-266/Cys-279, Cys-288/Cys-297, and Cys-351/Cys-372. Residues Asn-88, Asn-174, and Asn-214 are each glycosylated (N-linked (GlcNAc...) asparagine; by host). Asn-352, Asn-360, Asn-377, and Asn-382 each carry an N-linked (GlcNAc...) asparagine; by host glycan. The helical transmembrane segment at 420–440 (LCFWSAVFYTTTLFLHLVGFP) threads the bilayer. The Cytoplasmic portion of the chain corresponds to 441-480 (THRHISGEPCPLPHRLNRHGACNCGRFKRLKKPLVWYKHH). Zn(2+)-binding residues include His-442, His-444, Cys-450, His-454, Cys-462, Cys-464, and His-480.

It belongs to the arenaviridae GPC protein family. Interacts with glycoprotein G2. Part of the GP complex (GP-C) together with glycoprotein G1 and glycoprotein G2. The GP-complex interacts with protein Z, which interacts with ribonucleocapsid; these interactions may induce virion budding. In terms of assembly, homotrimer; disulfide-linked. In pre-fusion state, G1 homotrimers bind G2 homotrimers via ionic interactions. Part of the GP complex (GP-C) together with glycoprotein G2 and the stable signal peptide. The GP-complex interacts with protein Z, which interacts with ribonucleocapsid; these interactions may induce virion budding. As to quaternary structure, homotrimer. Interacts with the stable signal peptide. In pre-fusion state, G2 homotrimers bind G1 homotrimers via ionic interactions. Part of the GP complex (GP-C) together with glycoprotein G1 and the stable signal peptide. Acidification in the endosome triggers rearrangements, which ultimately leads to a 6 helix bundle formed by the two heptad repeat domains (HR1 and HR2) in post-fusion state. The GP-complex interacts with protein Z, which interacts with ribonucleocapsid; these interactions may induce virion budding. Post-translationally, specific enzymatic cleavages in vivo yield mature proteins. GP-C polyprotein is cleaved in the endoplasmic reticulum by the host protease MBTPS1. Only cleaved glycoprotein is incorporated into virions. In terms of processing, the SSP remains stably associated with the GP complex following cleavage by signal peptidase and plays crucial roles in the trafficking of GP through the secretory pathway. Myristoylation is necessary for GP2-mediated fusion activity.

It is found in the virion membrane. The protein resides in the host endoplasmic reticulum membrane. It localises to the host Golgi apparatus membrane. The protein localises to the host cell membrane. Functionally, functions as a cleaved signal peptide that is retained as the third component of the GP complex (GP-C). Helps to stabilize the spike complex in its native conformation. The SSP is required for efficient glycoprotein expression, post-translational maturation cleavage of G1 and G2, glycoprotein transport to the cell surface plasma membrane, formation of infectious virus particles, and acid pH-dependent glycoprotein-mediated cell fusion. Its function is as follows. Forms the virion spikes together with glycoprotein G2. The glycoprotein spike trimers are connected to the underlying matrix. Interacts with the host receptor leading to virus endocytosis. Forms the virion spikes together with glycoprotein G1. The glycoprotein spike trimers are connected to the underlying matrix. Class I viral fusion protein that directs fusion of viral and host endosomal membranes, leading to delivery of the nucleocapsid into the cytoplasm. Membrane fusion is mediated by irreversible conformational changes induced by acidification. This is Pre-glycoprotein polyprotein GP complex from Cupixi mammarenavirus (isolate Rat/Brasil/BeAn 119303/1970) (CPXV).